A 279-amino-acid chain; its full sequence is Methyltransferase trt5 (279 aa).

Residues 124–125 (DI) and 152–153 (DV) each bind S-adenosyl-L-methionine.

It belongs to the class I-like SAM-binding methyltransferase superfamily. In terms of assembly, homodimer.

Its pathway is secondary metabolite biosynthesis; terpenoid biosynthesis. In terms of biological role, methyltransferase; part of the gene cluster that mediates the biosynthesis of terretonin, a fungal meroterpenoid that acts as a mycotoxin. The first step of the pathway is the synthesis of 3,5-dimethylorsellinic acid (DMOA) by the polyketide synthase trt4. DMOA is then prenylated into farnesyl-DMOA by the polyprenyl transferase trt2. Methylation by the methyltransferase trt5 then leads to farnesyl-DMOA methyl ester which is further subject to epoxidation by the FAD-dependent monooxygenase trt8 to yield epoxyfarnesyl-DMOA methyl ester. Cyclization of epoxyfarnesyl-DMOA methyl ester by the terpene cyclase trt1 leads to a tetracycle intermediate which is in turn converted to preterretonin. Dehydrogenase trt9 comes next to transform preterretonin to preterrenoid. The FAD-dependent monooxygenase trt3 is then required for the C-hydroxylation at C16 of preterrenoid to yield terrenoid. The cytochrome P450 trt6 catalyzes three successive oxidations to transform terrenoid into an unstable intermediate, which then undergoes the D-ring expansion and unusual rearrangement of the methoxy group to afford the core skeleton of terretonin. Trt14 catalyzes the D-ring expansion of terretonin involving intramolecular methoxy rearrangement as well as the hydrolysis of the expanded D-ring and the methyl ester moiety. Finally, the nonheme iron-dependent dioxygenase trt7 accomplishes the last two oxidation reactions steps to complete the biosynthesis of terretonin. Terretonin C is produced via spontaneous decarboxylation of the terretonin precursor. Another shunt product of the terretonin biosynthesis is dihydrofarnesyl-DMOA, derived from epoxyfarnesyl-DMOA through hydrolysis of the epoxide. This chain is Methyltransferase trt5, found in Aspergillus terreus (strain NIH 2624 / FGSC A1156).